Reading from the N-terminus, the 2280-residue chain is Genome polyprotein (2280 aa).

One can recognise an SF3 helicase domain in the interval 454–608 (ETQANNIRST…EEWKKRNPGK (155 aa)). 480–487 (GAPGIGKT) is an ATP binding site. An O-(5'-phospho-RNA)-tyrosine modification is found at tyrosine 965. In terms of domain architecture, Peptidase C24 spans 1054 to 1202 (APTAIVEFTQ…TKVAQRVVKE (149 aa)). Residues histidine 1084, glutamate 1105, and cysteine 1169 each act as for 3CLpro activity in the active site. The RdRp catalytic domain maps to 1442-1567 (GVLYCLDYSK…SVCPATASIF (126 aa)). Positions 1722–1746 (GNGSNPEPKQSNNPMVVDPPGTTGP) are disordered. Over residues 1723-1735 (NGSNPEPKQSNNP) the composition is skewed to polar residues.

As to quaternary structure, homodimer. Homomultimer. Post-translationally, specific enzymatic cleavages in vivo yield mature proteins. Pro-Pol is first autocatalytically cleaved, then processes the whole polyprotein. In terms of processing, VPg is uridylylated by the polymerase and is covalently attached to the 5'-end of the polyadenylated genomic and subgenomic RNAs. This uridylylated form acts as a nucleotide-peptide primer for the polymerase.

The protein localises to the virion. Its subcellular location is the host cytoplasm. The catalysed reaction is a ribonucleoside 5'-triphosphate + H2O = a ribonucleoside 5'-diphosphate + phosphate + H(+). It catalyses the reaction RNA(n) + a ribonucleoside 5'-triphosphate = RNA(n+1) + diphosphate. It carries out the reaction Endopeptidase with a preference for cleavage when the P1 position is occupied by Glu-|-Xaa and the P1' position is occupied by Gly-|-Yaa.. Functionally, together with NTPase and NS4, initiates the formation of the replication complex. Induces the proliferation of the host smooth ER membranes forming long tubular structures. These remodeled membranes probably form the viral factories that contain the replication complex. Its function is as follows. Displays NTPase activity, but no helicase activity. Induces the formation of convoluted membranes derived from the host ER. These remodeled membranes probably form the viral factories that contain the replication complex. Together with NS2 and NS4, initiates the formation of the replication complex. In terms of biological role, probable key protein responsible for the formation of membrane alterations by the virus. Induces the formation of convoluted membranes derived from the host ER. These remodeled membranes probably form the viral factories that contain the replication complex. Together with NS2 and NTPase, initiates the formation of the replication complex. Viral genome-linked protein is covalently linked to the 5'-end of the positive-strand, negative-strand genomic RNAs and subgenomic RNA. Acts as a genome-linked replication primer. May recruit ribosome to viral RNA thereby promoting viral proteins translation. Interacts with host translation initiation complex to allow the translation of viral proteins. Functionally, protease-polymerase p76 processes the polyprotein: Pro-Pol is first released by autocleavage, then all other proteins are cleaved. Cleaves host translation initiation factor eIF4G1, eIF4G2 and PABP1 thereby inducing a shutdown of host protein synthesis. This shutdown may not prevent viral mRNA from being translated since viral Vpg replaces the cap. It is also an RNA-directed RNA polymerase which replicates genomic and antigenomic viral RNA by recognizing specific signals. Also transcribes a subgenomic mRNA by initiating RNA synthesis internally on antigenomic RNA. This sgRNA codes for structural proteins. Catalyzes the covalent attachment VPg with viral RNAs. Its function is as follows. Capsid protein self assembles to form an icosahedral capsid with a T=3 symmetry, about 38 nm in diameter, and consisting of 180 capsid proteins. The capsid encapsulate the genomic RNA and VP2 proteins. Attaches virion to target cells, inducing endocytosis of the viral particle. Acidification of the endosome induces conformational change of capsid protein thereby injecting virus genomic RNA into host cytoplasm. The protein is Genome polyprotein of Sapporo virus (isolate GI/Human/Germany/pJG-Sap01) (Hu/Dresden/pJG-Sap01/DE).